The chain runs to 55 residues: UPF0434 protein BPEN_388 (55 aa).

The protein belongs to the UPF0434 family.

The protein is UPF0434 protein BPEN_388 of Blochmanniella pennsylvanica (strain BPEN).